Reading from the N-terminus, the 43-residue chain is Potassium channel toxin gamma-KTx 4.8 (43 aa).

Intrachain disulfides connect Cys5–Cys23, Cys11–Cys34, Cys20–Cys39, and Cys24–Cys41.

The protein belongs to the ergtoxin family. Gamma-KTx 4 subfamily. Expressed by the venom gland.

The protein localises to the secreted. Functionally, reversibly blocks Kv11/ERG potassium channels. This Centruroides elegans (Bark scorpion) protein is Potassium channel toxin gamma-KTx 4.8.